Reading from the N-terminus, the 212-residue chain is Protein-L-isoaspartate O-methyltransferase (212 aa).

The active site involves serine 60.

The protein belongs to the methyltransferase superfamily. L-isoaspartyl/D-aspartyl protein methyltransferase family.

It is found in the cytoplasm. The enzyme catalyses [protein]-L-isoaspartate + S-adenosyl-L-methionine = [protein]-L-isoaspartate alpha-methyl ester + S-adenosyl-L-homocysteine. Its function is as follows. Catalyzes the methyl esterification of L-isoaspartyl residues in peptides and proteins that result from spontaneous decomposition of normal L-aspartyl and L-asparaginyl residues. It plays a role in the repair and/or degradation of damaged proteins. The polypeptide is Protein-L-isoaspartate O-methyltransferase (Methanococcus maripaludis (strain C5 / ATCC BAA-1333)).